Consider the following 729-residue polypeptide: Fatty acid oxidation complex subunit alpha (729 aa).

Residues 1–189 (MLYKGDTLYL…KIGLVDGVVA (189 aa)) form an enoyl-CoA hydratase/isomerase region. Position 296 (Asp-296) interacts with substrate. The tract at residues 311–729 (ETPKHAAVLG…ARPVGALKTA (419 aa)) is 3-hydroxyacyl-CoA dehydrogenase. NAD(+) is bound by residues Met-324, Asp-343, 400 to 402 (VVE), Lys-407, and Ser-429. His-450 acts as the For 3-hydroxyacyl-CoA dehydrogenase activity in catalysis. Asn-453 lines the NAD(+) pocket. Residues Asn-500 and Tyr-660 each contribute to the substrate site.

The protein in the N-terminal section; belongs to the enoyl-CoA hydratase/isomerase family. It in the C-terminal section; belongs to the 3-hydroxyacyl-CoA dehydrogenase family. As to quaternary structure, heterotetramer of two alpha chains (FadB) and two beta chains (FadA).

It carries out the reaction a (3S)-3-hydroxyacyl-CoA + NAD(+) = a 3-oxoacyl-CoA + NADH + H(+). The catalysed reaction is a (3S)-3-hydroxyacyl-CoA = a (2E)-enoyl-CoA + H2O. The enzyme catalyses a 4-saturated-(3S)-3-hydroxyacyl-CoA = a (3E)-enoyl-CoA + H2O. It catalyses the reaction (3S)-3-hydroxybutanoyl-CoA = (3R)-3-hydroxybutanoyl-CoA. It carries out the reaction a (3Z)-enoyl-CoA = a 4-saturated (2E)-enoyl-CoA. The catalysed reaction is a (3E)-enoyl-CoA = a 4-saturated (2E)-enoyl-CoA. It participates in lipid metabolism; fatty acid beta-oxidation. Functionally, involved in the aerobic and anaerobic degradation of long-chain fatty acids via beta-oxidation cycle. Catalyzes the formation of 3-oxoacyl-CoA from enoyl-CoA via L-3-hydroxyacyl-CoA. It can also use D-3-hydroxyacyl-CoA and cis-3-enoyl-CoA as substrate. This is Fatty acid oxidation complex subunit alpha from Klebsiella pneumoniae (strain 342).